The chain runs to 103 residues: UPF0132 membrane protein AF_0105 (103 aa).

A run of 3 helical transmembrane segments spans residues 5–25 (VAGA…LLME), 35–55 (AMQS…LSFI), and 58–78 (IGVL…LVCI).

This sequence belongs to the UPF0132 family.

The protein localises to the cell membrane. This is UPF0132 membrane protein AF_0105 from Archaeoglobus fulgidus (strain ATCC 49558 / DSM 4304 / JCM 9628 / NBRC 100126 / VC-16).